The sequence spans 556 residues: GDP-Man:Man(3)GlcNAc(2)-PP-Dol alpha-1,2-mannosyltransferase (556 aa).

At 1 to 7 (MANGLFT) the chain is on the lumenal side. The helical transmembrane segment at 8 to 28 (YVAISLFTIGPLLALFIPFVW) threads the bilayer. At 29-184 (RLVGSSLGWY…RWVLASTWPY (156 aa)) the chain is on the cytoplasmic side. Residues 64–79 (SKSAKGRKAEKEDRDT) show a composition bias toward basic and acidic residues. Residues 64–86 (SKSAKGRKAEKEDRDTFNNTEAT) are disordered. Residues 185–205 (FTLAGQSFGSLIMAWDAFSLL) constitute an intramembrane region (helical). Residues 206 to 454 (VPDIFVDTMG…VGVNGMWNEH (249 aa)) lie on the Cytoplasmic side of the membrane. An intramembrane region (helical) is located at residues 455–475 (FGIGVVEYQAAGLISVVHDSG). Residues 476–556 (GPKLDIVVEV…KAVEKPKSRQ (81 aa)) are Cytoplasmic-facing.

Belongs to the glycosyltransferase group 1 family. Glycosyltransferase 4 subfamily.

The protein resides in the endoplasmic reticulum membrane. The catalysed reaction is an alpha-D-Man-(1-&gt;3)-[alpha-D-Man-(1-&gt;6)]-beta-D-Man-(1-&gt;4)-beta-D-GlcNAc-(1-&gt;4)-alpha-D-GlcNAc-diphospho-di-trans,poly-cis-dolichol + 2 GDP-alpha-D-mannose = an alpha-D-Man-(1-&gt;2)-alpha-D-Man-(1-&gt;2)-alpha-D-Man-(1-&gt;3)-[alpha-D-Man-(1-&gt;6)]-beta-D-Man-(1-&gt;4)-beta-D-GlcNAc-(1-&gt;4)-alpha-D-GlcNAc-diphospho-di-trans,poly-cis-dolichol + 2 GDP + 2 H(+). The protein operates within protein modification; protein glycosylation. GDP-Man:Man(3)GlcNAc(2)-PP-Dol alpha-1,2-mannosyltransferase that operates in the biosynthetic pathway of dolichol-linked oligosaccharides, the glycan precursors employed in protein asparagine (N)-glycosylation. The assembly of dolichol-linked oligosaccharides begins on the cytosolic side of the endoplasmic reticulum membrane and finishes in its lumen. The sequential addition of sugars to dolichol pyrophosphate produces dolichol-linked oligosaccharides containing fourteen sugars, including two GlcNAcs, nine mannoses and three glucoses. Once assembled, the oligosaccharide is transferred from the lipid to nascent proteins by oligosaccharyltransferases. Catalyzes, on the cytoplasmic face of the endoplasmic reticulum, the addition of the fourth and fifth mannose residues to the dolichol-linked oligosaccharide chain, to produce Man(5)GlcNAc(2)-PP-dolichol core oligosaccharide. This is GDP-Man:Man(3)GlcNAc(2)-PP-Dol alpha-1,2-mannosyltransferase (alg-11) from Neurospora crassa (strain ATCC 24698 / 74-OR23-1A / CBS 708.71 / DSM 1257 / FGSC 987).